The chain runs to 191 residues: Elongation factor P (191 aa).

Lys-34 bears the N6-(3,6-diaminohexanoyl)-5-hydroxylysine mark.

Belongs to the elongation factor P family. In terms of processing, may be beta-lysylated on the epsilon-amino group of Lys-34 by the combined action of EpmA and EpmB, and then hydroxylated on the C5 position of the same residue by EpmC (if this protein is present). Lysylation is critical for the stimulatory effect of EF-P on peptide-bond formation. The lysylation moiety may extend toward the peptidyltransferase center and stabilize the terminal 3-CCA end of the tRNA. Hydroxylation of the C5 position on Lys-34 may allow additional potential stabilizing hydrogen-bond interactions with the P-tRNA.

It localises to the cytoplasm. It functions in the pathway protein biosynthesis; polypeptide chain elongation. Functionally, involved in peptide bond synthesis. Alleviates ribosome stalling that occurs when 3 or more consecutive Pro residues or the sequence PPG is present in a protein, possibly by augmenting the peptidyl transferase activity of the ribosome. Modification of Lys-34 is required for alleviation. The sequence is that of Elongation factor P from Psychrobacter sp. (strain PRwf-1).